The following is a 357-amino-acid chain: MTTHKQQIQDVYNCLGTVSHLLKESHTGEEIDDFEDNFYSQQMQKASANGSMFPNTLHQVSNFLEKLSVQAYNVQPLLSSAKYEILSNVRNLKSESDGKINRYEHESALGLKKLFNSPISSSTVNHDQPAEQPSDKSTDDSTGYPPWAIEAFNSESNIKNVGPPNFPMGQLGEILIGADPVISPRRQFPPPHYLEQLQRDHPPLFHLNAFDSPPPSPGNELEDYDFNMQIDLNGVIPADVQLLDEFQQENDKTESNNTICQLDLCSSFQYLLKTTTENAQDKQNVLKEILHHSDLVLHHAADQCPFVLKEDMIELSTCIGLIYESLERNTDFESYLKVRSVVQYLVSKVRSALKKYI.

Residues 120–145 (SSSTVNHDQPAEQPSDKSTDDSTGYP) form a disordered region.

This is an uncharacterized protein from Caenorhabditis elegans.